We begin with the raw amino-acid sequence, 501 residues long: Acid-sensing ion channel 1A (501 aa).

Residues 1–54 lie on the Cytoplasmic side of the membrane; that stretch reads MKTSVMDLKVEPMDIDFDQPPPLQVFAHTSTLHGISHIFSYEKITAKCCLWVVF. A helical transmembrane segment spans residues 55-71; it reads FLSSLTFLMYVCIDRIQ. Topologically, residues 72–429 are extracellular; the sequence is FYLEYPHVTK…ETIEQRKAYE (358 aa). Intrachain disulfides connect C98–C199, C177–C184, C294–C369, C312–C365, C316–C363, C325–C347, and C327–C339. The N-linked (GlcNAc...) asparagine glycan is linked to N164. N370 carries N-linked (GlcNAc...) asparagine glycosylation. Residues 430–460 form a discontinuously helical membrane-spanning segment; it reads VAGLLGDIGGQMGLFIGASILTILELFDYLY. The GAS motif; ion selectivity filter signature appears at 446–448; sequence GAS. The Cytoplasmic segment spans residues 461–501; sequence EVMKYRLCRCSNKKHHNNNNNTDHNAVFSLDDVNCHVSKFH.

The protein belongs to the amiloride-sensitive sodium channel (TC 1.A.6) family. ASIC1 subfamily. As to quaternary structure, homotrimer. Heterotrimer; with other ASIC proteins producing channel with different properties. Interacts with asic1c. In terms of tissue distribution, expressed in central nervous system. Faintly expressed in the trunk, presumably in dorsal root ganglia.

The protein resides in the cell membrane. Its subcellular location is the postsynaptic cell membrane. The protein localises to the cell projection. It is found in the dendrite. The enzyme catalyses Na(+)(in) = Na(+)(out). It catalyses the reaction K(+)(in) = K(+)(out). It carries out the reaction Li(+)(in) = Li(+)(out). The catalysed reaction is Ca(2+)(in) = Ca(2+)(out). With respect to regulation, inhibited by the diuretic drug amiloride. In terms of biological role, forms voltage-independent, pH-gated trimeric sodium channels that act as postsynaptic excitatory receptors in the nervous system, playing a crucial role in regulating synaptic plasticity, learning, and memory. Upon extracellular pH drop this channel elicits transient, fast activating, and completely desensitizing inward currents. Displays high selectivity for sodium ions but can also permit the permeation of other cations. This is Acid-sensing ion channel 1A (asic1a) from Danio rerio (Zebrafish).